The following is a 94-amino-acid chain: DASH complex subunit dad2 (94 aa).

A coiled-coil region spans residues 18 to 38; that stretch reads KLRDSSNDMVQQIETLAAKLE. Residues 72-94 are disordered; it reads VRIPPSTSNTNASATEQGDVEEV. A compositionally biased stretch (polar residues) spans 76 to 87; that stretch reads PSTSNTNASATE.

Belongs to the DASH complex DAD2 family. Component of the DASH complex consisting of ask1, dad1, dad2, dad3, dad4, dam1, duo1, dad5, spc19 and spc34, with a stoichiometry of one copy of each subunit per complex. Multiple DASH complexes oligomerize to form a ring that encircles spindle microtubules and organizes the rod-like NDC80 complexes of the outer kinetochore. DASH complex oligomerization strengthens microtubule attachments. On cytoplasmic microtubules, DASH complexes appear to form patches instead of rings.

It localises to the nucleus. The protein localises to the cytoplasm. The protein resides in the cytoskeleton. It is found in the spindle. Its subcellular location is the chromosome. It localises to the centromere. The protein localises to the kinetochore. Its function is as follows. Component of the DASH complex that connects microtubules with kinetochores and couples microtubule depolymerisation to chromosome movement; it is involved in retrieving kinetochores to the spindle poles before their re-orientation on the spindle in early mitosis and allows microtubule depolymerization to pull chromosomes apart and resist detachment during anaphase. Kinetochores, consisting of a centromere-associated inner segment and a microtubule-contacting outer segment, play a crucial role in chromosome segregation by mediating the physical connection between centromeric DNA and microtubules. Kinetochores also serve as an input point for the spindle assembly checkpoint, which delays anaphase until all chromosomes have bioriented on the mitotic spindle. The DASH complex mediates bipolar kinetochore-microtubule attachments and facilitates the formation of additional interactions between outer kinetochore components and spindle microtubules. During chromosome movement along the microtubule, it is required both for the sliding of kinetochores along the lateral side of the microtubule and also for microtubule end-on pulling on the kinetochore. Modulates cytoplasmic microtubule dynamics by tracking the plus-end of shortening microtubules and slowing their depolymerization. This Schizosaccharomyces pombe (strain 972 / ATCC 24843) (Fission yeast) protein is DASH complex subunit dad2.